A 95-amino-acid polypeptide reads, in one-letter code: Cliotide T5 (95 aa).

Positions 1-30 form a cross-link, cyclopeptide (Gly-Asn); the sequence is GIPCGESCVFIPCISTVIGCSCKNKVCYRN. Disulfide bonds link Cys-4–Cys-20, Cys-8–Cys-22, and Cys-13–Cys-27. A propeptide spans 31 to 95 (removed in mature form); sequence HVIAAEAKTM…KDHLKMSITN (65 aa).

In terms of processing, contains 3 disulfide bonds. This is a cyclic peptide. As to expression, expressed in stem, shoot, root, leaf, pod and nodule but not in flower and seed (at protein level).

Its function is as follows. Probably participates in a plant defense mechanism. This Clitoria ternatea (Butterfly pea) protein is Cliotide T5.